A 100-amino-acid chain; its full sequence is MSVDTATVAKIASLARIKVSEAELGAMVPELNGILAWVEQLGEVDVTGIEPMTAVIPNKQRLRDDVVNADPLTGGDMRDAVLANAPAPEHGFFGVPKVIE.

It belongs to the GatC family. As to quaternary structure, heterotrimer of A, B and C subunits.

It carries out the reaction L-glutamyl-tRNA(Gln) + L-glutamine + ATP + H2O = L-glutaminyl-tRNA(Gln) + L-glutamate + ADP + phosphate + H(+). The enzyme catalyses L-aspartyl-tRNA(Asn) + L-glutamine + ATP + H2O = L-asparaginyl-tRNA(Asn) + L-glutamate + ADP + phosphate + 2 H(+). In terms of biological role, allows the formation of correctly charged Asn-tRNA(Asn) or Gln-tRNA(Gln) through the transamidation of misacylated Asp-tRNA(Asn) or Glu-tRNA(Gln) in organisms which lack either or both of asparaginyl-tRNA or glutaminyl-tRNA synthetases. The reaction takes place in the presence of glutamine and ATP through an activated phospho-Asp-tRNA(Asn) or phospho-Glu-tRNA(Gln). The chain is Aspartyl/glutamyl-tRNA(Asn/Gln) amidotransferase subunit C from Novosphingobium aromaticivorans (strain ATCC 700278 / DSM 12444 / CCUG 56034 / CIP 105152 / NBRC 16084 / F199).